The chain runs to 166 residues: Small ribosomal subunit protein uS5 (166 aa).

An S5 DRBM domain is found at 11–74 (LQEKLVQVNR…DQARRNMVKV (64 aa)).

Belongs to the universal ribosomal protein uS5 family. Part of the 30S ribosomal subunit. Contacts proteins S4 and S8.

Its function is as follows. With S4 and S12 plays an important role in translational accuracy. In terms of biological role, located at the back of the 30S subunit body where it stabilizes the conformation of the head with respect to the body. This is Small ribosomal subunit protein uS5 from Chromohalobacter salexigens (strain ATCC BAA-138 / DSM 3043 / CIP 106854 / NCIMB 13768 / 1H11).